A 362-amino-acid polypeptide reads, in one-letter code: METTVRKQKKNLETKKPSIYSLQLHEMQDWLKEQGEPKFRAGQIFDWLYKKRVKNYEDMSNLSKGLRDKLSNSFDITTLKTLVKQTSSDGTIKFLFQLYDGYSIETVLMRHEYGNSICVTTQVGCRIGCTFCASTLGGLKRNLEAGEIVAQVVEVQRALDETEERVSSLVVMGIGEPFDNYDNLMGFLRIINHEKGLHIGARHMTVSTSGIIPKIYKFAEEDLQINFAISLHAPNSELRSKLMPINRAYKLPDLMEAIKYYVNRTGRRITFEYGLFGGENDQVEHAEELAALLKGVKCHVNLIPVNYVPERDYVRTPREQIFLFEKTLKDRGVNVTIRREQGHDIDAACGQLRAKERKEETR.

The active-site Proton acceptor is glutamate 105. One can recognise a Radical SAM core domain in the interval 111-344; that stretch reads HEYGNSICVT…VTIRREQGHD (234 aa). The cysteines at positions 118 and 349 are disulfide-linked. [4Fe-4S] cluster is bound by residues cysteine 125, cysteine 129, and cysteine 132. S-adenosyl-L-methionine-binding positions include 175-176, serine 207, 230-232, and asparagine 306; these read GE and SLH. The S-methylcysteine intermediate role is filled by cysteine 349.

Belongs to the radical SAM superfamily. RlmN family. [4Fe-4S] cluster is required as a cofactor.

Its subcellular location is the cytoplasm. It catalyses the reaction adenosine(2503) in 23S rRNA + 2 reduced [2Fe-2S]-[ferredoxin] + 2 S-adenosyl-L-methionine = 2-methyladenosine(2503) in 23S rRNA + 5'-deoxyadenosine + L-methionine + 2 oxidized [2Fe-2S]-[ferredoxin] + S-adenosyl-L-homocysteine. The catalysed reaction is adenosine(37) in tRNA + 2 reduced [2Fe-2S]-[ferredoxin] + 2 S-adenosyl-L-methionine = 2-methyladenosine(37) in tRNA + 5'-deoxyadenosine + L-methionine + 2 oxidized [2Fe-2S]-[ferredoxin] + S-adenosyl-L-homocysteine. Functionally, specifically methylates position 2 of adenine 2503 in 23S rRNA and position 2 of adenine 37 in tRNAs. In Bacillus cereus (strain ATCC 14579 / DSM 31 / CCUG 7414 / JCM 2152 / NBRC 15305 / NCIMB 9373 / NCTC 2599 / NRRL B-3711), this protein is Probable dual-specificity RNA methyltransferase RlmN.